Here is a 296-residue protein sequence, read N- to C-terminus: 4-hydroxybenzoate octaprenyltransferase (296 aa).

8 helical membrane passes run 22–42, 46–66, 99–121, 139–159, 163–183, 211–231, 238–258, and 270–290; these read PIGI…SALG, WIVV…GCVI, LFAG…LVIW, FFAI…PMAY, LGEV…WAVA, FDVA…GGIG, PAFY…YTWI, and FLHN…DFLV.

Belongs to the UbiA prenyltransferase family. Mg(2+) is required as a cofactor.

It is found in the cell inner membrane. It catalyses the reaction all-trans-octaprenyl diphosphate + 4-hydroxybenzoate = 4-hydroxy-3-(all-trans-octaprenyl)benzoate + diphosphate. Its pathway is cofactor biosynthesis; ubiquinone biosynthesis. Functionally, catalyzes the prenylation of para-hydroxybenzoate (PHB) with an all-trans polyprenyl group. Mediates the second step in the final reaction sequence of ubiquinone-8 (UQ-8) biosynthesis, which is the condensation of the polyisoprenoid side chain with PHB, generating the first membrane-bound Q intermediate 3-octaprenyl-4-hydroxybenzoate. This is 4-hydroxybenzoate octaprenyltransferase from Dechloromonas aromatica (strain RCB).